The chain runs to 473 residues: Cysteine--tRNA ligase (473 aa).

Cys28 serves as a coordination point for Zn(2+). Residues 30 to 40 (PTVYNMPHIGN) carry the 'HIGH' region motif. Cys213, His238, and Glu242 together coordinate Zn(2+). The 'KMSKS' region motif lies at 270 to 274 (KMSKS). Lys273 is an ATP binding site.

This sequence belongs to the class-I aminoacyl-tRNA synthetase family. Zn(2+) serves as cofactor.

It localises to the cytoplasm. It carries out the reaction tRNA(Cys) + L-cysteine + ATP = L-cysteinyl-tRNA(Cys) + AMP + diphosphate. This Methanosarcina mazei (strain ATCC BAA-159 / DSM 3647 / Goe1 / Go1 / JCM 11833 / OCM 88) (Methanosarcina frisia) protein is Cysteine--tRNA ligase.